The sequence spans 937 residues: Inactive tyrosine-protein kinase transmembrane receptor ROR1 (937 aa).

A signal peptide spans 1 to 29 (MHRPRRRGTRPPPLALLAALLLAARGADA). The Extracellular segment spans residues 30 to 406 (QETELSVSAE…KEKNKMEILY (377 aa)). An Ig-like C2-type domain is found at 42–141 (PTSSWNTSSE…VATNGKKVVS (100 aa)). Residues Asn47 and Asn66 are each glycosylated (N-linked (GlcNAc...) asparagine). Disulfide bonds link Cys79–Cys131, Cys170–Cys235, Cys178–Cys228, Cys219–Cys260, Cys248–Cys296, Cys252–Cys282, Cys313–Cys391, Cys334–Cys374, and Cys362–Cys386. The region spanning 165-299 (EEDGFCQPYR…SPEAANCIRI (135 aa)) is the FZ domain. Asn184 carries an N-linked (GlcNAc...) asparagine glycan. Residues 312 to 391 (KCYNSTGVDY…KSDLCDIPAC (80 aa)) form the Kringle domain. Asn315 carries N-linked (GlcNAc...) asparagine glycosylation. Residues 407–427 (ILVPSVAIPLAIAFLFFFICV) traverse the membrane as a helical segment. The Cytoplasmic portion of the chain corresponds to 428 to 937 (CRNNQKSSSP…HTESMISAEV (510 aa)). One can recognise a Protein kinase domain in the interval 473 to 746 (VRFMEELGEC…PRFKDIHVRL (274 aa)). Residues 479-487 (LGECTFGKI) and Lys506 contribute to the ATP site. The residue at position 645 (Tyr645) is a Phosphotyrosine; by autocatalysis. The segment covering 753-762 (SSHTSSTTPS) has biased composition (low complexity). 3 disordered regions span residues 753–778 (SSHT…ASPV), 840–890 (GPPR…HMSI), and 916–937 (QSSL…SAEV). The segment covering 763 to 778 (GGNATTQTTSLSASPV) has biased composition (polar residues). The segment covering 854–864 (RSPSSASGSTS) has biased composition (low complexity). Residues 865 to 880 (TGHVASLPSSGSNQEA) are compositionally biased toward polar residues.

Belongs to the protein kinase superfamily. Tyr protein kinase family. ROR subfamily. Interacts with ERBB2 and IGFBP5. As to expression, at postnatal P0, expressed in heart, lung, liver, kidney, spleen and inner ear.

Its subcellular location is the membrane. The protein localises to the cell projection. It localises to the axon. In terms of biological role, has very low kinase activity in vitro and is unlikely to function as a tyrosine kinase in vivo. Receptor for ligand WNT5A which activate downstream NFkB signaling pathway and may result in the inhibition of WNT3A-mediated signaling. In inner ear, crucial for spiral ganglion neurons to innervate auditory hair cells. Via IGFBP5 ligand, forms a complex with ERBB2 to enhance CREB oncogenic signaling. In Mus musculus (Mouse), this protein is Inactive tyrosine-protein kinase transmembrane receptor ROR1 (Ror1).